Consider the following 421-residue polypeptide: Glucose-1-phosphate adenylyltransferase (421 aa).

Alpha-D-glucose 1-phosphate is bound by residues Tyr108, Gly173, 188–189 (EK), and Ser206.

The protein belongs to the bacterial/plant glucose-1-phosphate adenylyltransferase family. Homotetramer.

It catalyses the reaction alpha-D-glucose 1-phosphate + ATP + H(+) = ADP-alpha-D-glucose + diphosphate. The protein operates within glycan biosynthesis; glycogen biosynthesis. Its function is as follows. Involved in the biosynthesis of ADP-glucose, a building block required for the elongation reactions to produce glycogen. Catalyzes the reaction between ATP and alpha-D-glucose 1-phosphate (G1P) to produce pyrophosphate and ADP-Glc. The chain is Glucose-1-phosphate adenylyltransferase from Mesorhizobium japonicum (strain LMG 29417 / CECT 9101 / MAFF 303099) (Mesorhizobium loti (strain MAFF 303099)).